Consider the following 452-residue polypeptide: COBRA-like protein 1 (452 aa).

The N-terminal stretch at 1-33 is a signal peptide; it reads MGFFLCSSSSIFFKFGISIIFLVSFSGLTPSEA. N42, N167, N175, N214, N239, N254, N323, N338, and N357 each carry an N-linked (GlcNAc...) asparagine glycan. A lipid anchor (GPI-anchor amidated serine) is attached at S432. Positions 433–452 are cleaved as a propeptide — removed in mature form; the sequence is VGSLFAAMALLLIVFLHGNL.

The protein belongs to the COBRA family. Expressed in roots, stems, leaves, flowers and siliques.

It localises to the cell membrane. The polypeptide is COBRA-like protein 1 (COBL1) (Arabidopsis thaliana (Mouse-ear cress)).